A 345-amino-acid chain; its full sequence is Polyprenyl transferase dpmpC (345 aa).

8 helical membrane-spanning segments follow: residues 24–44 (PVFASFAGLWSTLLAGAARLA), 60–80 (GLCFLAAYIFYGAGTVWNDWV), 101–121 (VTTFQAMLWMVLQTLATWYLL), 183–203 (LYVYPQYILGFIVAWPAVIGW), 220–240 (CLPLCSMVYFWIIYLNTAYSY), 261–281 (HLHLLLVALASPVPVCMLLFL), 286–306 (SFWLWATWLGGWTASFAEQLI), and 319–339 (LHKSNFMLGIWTIFACAVELL).

This sequence belongs to the UbiA prenyltransferase family. It depends on Mg(2+) as a cofactor.

It is found in the membrane. It functions in the pathway secondary metabolite biosynthesis; terpenoid biosynthesis. Functionally, polyprenyl transferase; part of the gene cluster that mediates the biosynthesis of diterpenoid pyrones. The first step of the pathway is the synthesis of the alpha-pyrone moiety by the polyketide synthase dpmpA via condensation of one acetyl-CoA starter unit with 3 malonyl-CoA units and 2 methylations. The alpha-pyrone is then combined with geranylgeranyl pyrophosphate (GGPP) formed by the GGPP synthase dpmpD through the action of the prenyltransferase dpmpC to yield a linear alpha-pyrone diterpenoid. Subsequent steps in the diterpenoid pyrone biosynthetic pathway involve the decalin core formation, which is initiated by the epoxidation of the C10-C11 olefin by the FAD-dependent oxidoreductase dpmpE, and is followed by a cyclization cascade catalyzed by the terpene cyclase dpmpB. The short chain dehydrogenase/reductase dpmpG then oxidizes the 8S hydroxy group to a ketone and the short chain dehydrogenase/reductase dpmpH reduces the ketone to the 8R hydroxy group to yield higginsianin B. Higginsianin B is further methylated by the methyltransferase dpmpI to produce the intermediate named FDDP B. The cytochrome P450 monooxygenase dpmpJ then oxidizes the C-26 methyl to primary alcohol, producing the final diterpenoid pyrone with a C-26 primary alcohol on the gamma-pyrone moiety named FDDP C. The protein is Polyprenyl transferase dpmpC of Macrophomina phaseolina (strain MS6) (Charcoal rot fungus).